A 212-amino-acid polypeptide reads, in one-letter code: MNSQQCVIIAIAGASASGKSLIAKTIFDELRRDLGTDQIGVINEDAYYRDQSHLSMDERVLTNYDHPKALDHQLLCTHLQLLKSGEAVDIPCYSYTEHTRMAETVKMTPKKVIILEGILLLTDPKLRELMDASVFMDTPLDICFLRRLTRDVAERGRTMESVISQYKKTVRPMFLQFIEPSKQYADIIVPRGGKNRIATDILKTRIQHLLAK.

Position 13–20 (13–20) interacts with ATP; sequence GASASGKS.

This sequence belongs to the uridine kinase family.

Its subcellular location is the cytoplasm. The enzyme catalyses uridine + ATP = UMP + ADP + H(+). It catalyses the reaction cytidine + ATP = CMP + ADP + H(+). It participates in pyrimidine metabolism; CTP biosynthesis via salvage pathway; CTP from cytidine: step 1/3. The protein operates within pyrimidine metabolism; UMP biosynthesis via salvage pathway; UMP from uridine: step 1/1. This Shewanella oneidensis (strain ATCC 700550 / JCM 31522 / CIP 106686 / LMG 19005 / NCIMB 14063 / MR-1) protein is Uridine kinase.